Reading from the N-terminus, the 358-residue chain is Protein RecA (358 aa).

G76 to T83 provides a ligand contact to ATP.

It belongs to the RecA family.

The protein resides in the cytoplasm. In terms of biological role, can catalyze the hydrolysis of ATP in the presence of single-stranded DNA, the ATP-dependent uptake of single-stranded DNA by duplex DNA, and the ATP-dependent hybridization of homologous single-stranded DNAs. It interacts with LexA causing its activation and leading to its autocatalytic cleavage. The chain is Protein RecA from Rhodospirillum centenum (strain ATCC 51521 / SW).